A 301-amino-acid chain; its full sequence is UDP-N-acetylenolpyruvoylglucosamine reductase 1 (301 aa).

Positions 29–196 constitute an FAD-binding PCMH-type domain; sequence KIGGPADILI…LEAVFQLQAG (168 aa). The active site involves R174. S225 (proton donor) is an active-site residue. The active site involves E295.

The protein belongs to the MurB family. It depends on FAD as a cofactor.

It is found in the cytoplasm. The catalysed reaction is UDP-N-acetyl-alpha-D-muramate + NADP(+) = UDP-N-acetyl-3-O-(1-carboxyvinyl)-alpha-D-glucosamine + NADPH + H(+). It participates in cell wall biogenesis; peptidoglycan biosynthesis. In terms of biological role, cell wall formation. This chain is UDP-N-acetylenolpyruvoylglucosamine reductase 1 (murB1), found in Bacillus cereus (strain ATCC 14579 / DSM 31 / CCUG 7414 / JCM 2152 / NBRC 15305 / NCIMB 9373 / NCTC 2599 / NRRL B-3711).